Reading from the N-terminus, the 722-residue chain is D-(-)-3-hydroxybutyrate oligomer hydrolase (722 aa).

The signal sequence occupies residues 1 to 25 (MKTMQGKGSGRRLRGALLVTMAASG). The active-site Charge relay system is the Ser-319.

Belongs to the D-(-)-3-hydroxybutyrate oligomer hydrolase family.

The protein resides in the secreted. The catalysed reaction is (3R)-hydroxybutanoate dimer + H2O = 2 (R)-3-hydroxybutanoate + H(+). It functions in the pathway lipid metabolism; butanoate metabolism. Its activity is regulated as follows. Inhibited by diisopropylfluorophosphate (DFP). Participates in the degradation of poly-3-hydroxybutyrate (PHB). It works downstream of poly(3-hydroxybutyrate) depolymerase, hydrolyzing D(-)-3-hydroxybutyrate oligomers of various length (3HB-oligomers) into 3HB-monomers. This Ralstonia pickettii (Burkholderia pickettii) protein is D-(-)-3-hydroxybutyrate oligomer hydrolase.